The following is a 753-amino-acid chain: Probable tubulin--tyrosine ligase PBY1 (753 aa).

The TTL domain maps to 343–734 (MEYIYKPLTH…PIFNENRNKT (392 aa)).

The protein belongs to the tubulin--tyrosine ligase family. Requires Mg(2+) as cofactor. K(+) serves as cofactor.

Its subcellular location is the cytoplasm. The protein localises to the P-body. It carries out the reaction C-terminal L-alpha-aminoacyl-L-glutamyl-L-glutamyl-[tubulin] + L-tyrosine + ATP = C-terminal L-alpha-aminoacyl-L-glutamyl-L-glutamyl-L-tyrosyl-[tubulin] + ADP + phosphate + H(+). In terms of biological role, probable P-body-associated tubulin--tyrosine ligase. The polypeptide is Probable tubulin--tyrosine ligase PBY1 (PBY1) (Saccharomyces cerevisiae (strain ATCC 204508 / S288c) (Baker's yeast)).